The primary structure comprises 68 residues: MPKHEFSVDMTCGGCAEAVSRVLNKLGGVEFNIDLPNKKVCIESEHSSDILLATLNKTGKAVSYLGPK.

An HMA domain is found at 1 to 63; it reads MPKHEFSVDM…TLNKTGKAVS (63 aa). Cu cation-binding residues include C12 and C15. S47 is subject to Phosphoserine. The residue at position 60 (K60) is an N6-acetyllysine.

The protein belongs to the ATX1 family. Homodimer. Interacts with ATP7B. Interacts with ATP7A. Interacts (via dimer form) with SLC31A1 (via C-terminal domain); this interaction improves ATOX1 stability and controls intracellular Cu(I) levels.

In terms of biological role, binds and deliver cytosolic copper to the copper ATPase proteins. May be important in cellular antioxidant defense. In Rattus norvegicus (Rat), this protein is Copper transport protein ATOX1.